Consider the following 367-residue polypeptide: MSPARTLESSPLPTTQTAIIQGEGGILSIHHNAPLPTLRPDRILVKVAYVAINPCDWKMADRFPTPGCVDGCDFSGTVVALGSDWAKTGRFKIGDRVCGGVHGSNPIDQSTGCFADYVSADAQFTFHVPEYMGMEDAAAVGGTGIGTLGLALKRSLGLPGSPRDPVPESESVQVLVYAASTSVGTLATQLLRMSGHKPIGVCSAKNFDMVKSYGAVKLFDYHSPTCAQDIRAYTKNTLAHILDPITEPKTTELCYAAMGRAGGKYCALEAFAEEFCTRRVVKPELVMGMAILGGRIALDYGYESEADPEKRVFGVSWYEEMQELLDSGRLRNHPVRSFPGGFEGIMKGLHLLKTKQVSGEKLIVQLG.

C55–K58 is a binding site for NADP(+). T143–L150 contributes to the substrate binding site. Residues S203–N206, Y221, and L268–E269 each bind NADP(+). Residue G288 to L292 coordinates substrate. V357–S358 provides a ligand contact to NADP(+).

It belongs to the zinc-containing alcohol dehydrogenase family. Monomer.

Its pathway is mycotoxin biosynthesis. Its function is as follows. Trans-enoyl reductase; part of the gene cluster that mediates the biosynthesis of the cytotoxic leucine-containing cytochalasans, including aspochalasin C, aspochalasin E, TMC-169, flavichalasine F, aspergillin PZ, aspochalasin M and flavichalasine G. The first step in the pathway is catalyzed by the hybrid PKS-NRPS ffsA that utilizes 8 units of malonyl-CoA to iteratively assemble the octaketide chain before addition of L-leucine by the C-terminal NRPS modules. Because ffsA lacks a designated enoylreductase (ER) domain, the required activity is provided the enoyl reductase fssC. The methyltransferase (MT) domain of ffsA catalyzes the alpha-methylation at C10 and C14 using S-adenosyl-L-methionine as the methyl-donating cosubstrate. Reduction by the hydrolyase ffsE, followed by dehydration and intra-molecular Diels-Alder cyclization by the Diels-Alderase ffsF then yield the required isoindolone-fused macrocycle. A number of oxidative steps catalyzed by the tailoring cytochrome P450 monooxygenase ffsD, the FAD-linked oxidoreductase ffsJ and the short-chain dehydrogenase/reductase ffsI, are further required to afford the final products. This is Trans-enoyl reductase ffsC from Aspergillus flavipes.